The primary structure comprises 81 residues: Photosystem I iron-sulfur center (81 aa).

4Fe-4S ferredoxin-type domains lie at 2–31 and 39–68; these read SHSV…MIPW and IASA…VRVY. [4Fe-4S] cluster contacts are provided by Cys11, Cys14, Cys17, Cys21, Cys48, Cys51, Cys54, and Cys58.

The eukaryotic PSI reaction center is composed of at least 11 subunits. The cofactor is [4Fe-4S] cluster.

It is found in the plastid thylakoid membrane. It carries out the reaction reduced [plastocyanin] + hnu + oxidized [2Fe-2S]-[ferredoxin] = oxidized [plastocyanin] + reduced [2Fe-2S]-[ferredoxin]. Its function is as follows. Apoprotein for the two 4Fe-4S centers FA and FB of photosystem I (PSI); essential for photochemical activity. FB is the terminal electron acceptor of PSI, donating electrons to ferredoxin. The C-terminus interacts with PsaA/B/D and helps assemble the protein into the PSI complex. Required for binding of PsaD and PsaE to PSI. PSI is a plastocyanin-ferredoxin oxidoreductase, converting photonic excitation into a charge separation, which transfers an electron from the donor P700 chlorophyll pair to the spectroscopically characterized acceptors A0, A1, FX, FA and FB in turn. This Cuscuta reflexa (Southern Asian dodder) protein is Photosystem I iron-sulfur center.